The primary structure comprises 62 residues: Phylloseptin-Az7 (62 aa).

Positions 1 to 19 (LKKSLFLVLFLGLVSLSIC) are cleaved as a signal peptide. The propeptide occupies 20 to 40 (EEEKRETEEKENEQEDDKSEE). Phenylalanine 61 is modified (phenylalanine amide).

It belongs to the frog skin active peptide (FSAP) family. Phylloseptin subfamily. As to expression, expressed by the skin glands.

Its subcellular location is the secreted. Its function is as follows. Has antimicrobial activity. The protein is Phylloseptin-Az7 (psn15) of Pithecopus azureus (Orange-legged monkey tree frog).